A 66-amino-acid polypeptide reads, in one-letter code: Large ribosomal subunit protein bL31 (66 aa).

Zn(2+) is bound by residues cysteine 16, cysteine 18, cysteine 36, and cysteine 39.

Belongs to the bacterial ribosomal protein bL31 family. Type A subfamily. In terms of assembly, part of the 50S ribosomal subunit. It depends on Zn(2+) as a cofactor.

Its function is as follows. Binds the 23S rRNA. This is Large ribosomal subunit protein bL31 from Campylobacter curvus (strain 525.92).